The chain runs to 308 residues: Staphylococcal superantigen-like 4 (308 aa).

The first 30 residues, 1 to 30, serve as a signal peptide directing secretion; it reads MKITTIAKTSLALGLLTTGVITTTTQAANA. A disordered region spans residues 28–117; sequence ANATTPSSTK…TTKQVPTEIN (90 aa). 2 stretches are compositionally biased toward polar residues: residues 33–47 and 55–76; these read PSST…TPPS and SKPN…TANA. A compositionally biased stretch (low complexity) spans 77–93; the sequence is TTPPSTKVTTPPSTNTP. Polar residues predominate over residues 94–114; it reads QPMQSTKSDTPQSPTTKQVPT. The interval 180 to 278 is sialyl Lewis X-binding; that stretch reads VDVFVVLEEN…VIKMKNGGKY (99 aa).

The protein belongs to the staphylococcal/streptococcal toxin family.

The protein resides in the secreted. In terms of biological role, secreted protein that plays a role in immune innate response inhibition by interfering with host TLR2-mediated pathway. This chain is Staphylococcal superantigen-like 4, found in Staphylococcus aureus (strain Newman).